A 228-amino-acid chain; its full sequence is Protein crossbronx homolog (228 aa).

One can recognise a UBC core domain in the interval 14-168 (LQEYKILAEY…VEQCVEDSQR (155 aa)).

Belongs to the ubiquitin-conjugating enzyme family. FTS subfamily.

The protein is Protein crossbronx homolog of Anopheles gambiae (African malaria mosquito).